A 281-amino-acid chain; its full sequence is Acetyl-coenzyme A carboxylase carboxyl transferase subunit beta 2 (281 aa).

One can recognise a CoA carboxyltransferase N-terminal domain in the interval 26-281 (LLTRCPVCHE…TITQGGHQDV (256 aa)). Zn(2+) contacts are provided by Cys-30, Cys-33, Cys-48, and Cys-51. The C4-type zinc finger occupies 30–51 (CPVCHEDCYTQDLGEFKVCPHC).

This sequence belongs to the AccD/PCCB family. As to quaternary structure, acetyl-CoA carboxylase is a heterohexamer composed of biotin carboxyl carrier protein (AccB), biotin carboxylase (AccC) and two subunits each of ACCase subunit alpha (AccA) and ACCase subunit beta (AccD). Zn(2+) is required as a cofactor.

It localises to the cytoplasm. The catalysed reaction is N(6)-carboxybiotinyl-L-lysyl-[protein] + acetyl-CoA = N(6)-biotinyl-L-lysyl-[protein] + malonyl-CoA. Its pathway is lipid metabolism; malonyl-CoA biosynthesis; malonyl-CoA from acetyl-CoA: step 1/1. In terms of biological role, component of the acetyl coenzyme A carboxylase (ACC) complex. Biotin carboxylase (BC) catalyzes the carboxylation of biotin on its carrier protein (BCCP) and then the CO(2) group is transferred by the transcarboxylase to acetyl-CoA to form malonyl-CoA. The chain is Acetyl-coenzyme A carboxylase carboxyl transferase subunit beta 2 from Lactiplantibacillus plantarum (strain JDM1) (Lactobacillus plantarum).